A 389-amino-acid polypeptide reads, in one-letter code: Putative zinc finger CCCH domain-containing protein 10 (389 aa).

Over residues 1 to 11 the composition is skewed to polar residues; it reads MANVSFTFDSQ. The tract at residues 1-110 is disordered; sequence MANVSFTFDS…QDRRGSESRM (110 aa). Composition is skewed to basic and acidic residues over residues 12–52 and 86–110; these read EQNK…RVSE and RSHETESRLWQRARTQDRRGSESRM. 2 C3H1-type zinc fingers span residues 131–157 and 158–190; these read RPGEDNCLFYMKNHLCEWGSECCYNHP and PLQEIPCRIGKKLDCKAGACKRGSNCPFNHPKE. A disordered region spans residues 183 to 296; the sequence is CPFNHPKERD…ATATGKVSGK (114 aa). 2 stretches are compositionally biased toward basic and acidic residues: residues 204–243 and 251–284; these read PDLRRNDSGRRYNTESRSWPENKEKEVGQFRDHQDSKEDA and RPRDVEMRKRSRSPDFRAKTETKEHREAEERSSR.

The protein is Putative zinc finger CCCH domain-containing protein 10 of Arabidopsis thaliana (Mouse-ear cress).